Consider the following 473-residue polypeptide: Membrane-bound acylglycerophosphatidylinositol O-acyltransferase MBOAT7 (473 aa).

Residues 1–5 (MTPEE) lie on the Cytoplasmic side of the membrane. Residues 6–22 (WTYLMVLLISIPVGFLF) form a helical membrane-spanning segment. Topologically, residues 23–33 (KKAGPGLKRWG) are lumenal. The helical transmembrane segment at 34 to 57 (AAAVGLGLTLFTCGPHSLHSLITI) threads the bilayer. The Cytoplasmic segment spans residues 58–73 (LGTWALIQAQPCSCHA). The helical transmembrane segment at 74 to 93 (LALAWTFSYLLFFRALSLLG) threads the bilayer. Over 94–194 (LPTPTPFTNA…VPSLRPLLRR (101 aa)) the chain is Lumenal. Residues 195–212 (AWPAPLFGLLFLLSSHLF) traverse the membrane as a helical segment. Residues 213–231 (PLEAVREDAFYARPLPTRL) lie on the Cytoplasmic side of the membrane. The helical transmembrane segment at 232–261 (FYMIPVFFAFRMRFYVAWIAAECGCIAAGF) threads the bilayer. Residues 262–426 (GAYPVAAKAR…LSMADTLRYW (165 aa)) lie on the Lumenal side of the membrane. An N-linked (GlcNAc...) asparagine glycan is attached at Asn321. A helical membrane pass occupies residues 427-447 (ASIYFWVHFLALACLGLGLVL). Residues 448 to 473 (GGGSPSKRKTPSQATSSQAKEKLREE) lie on the Cytoplasmic side of the membrane. The segment at 451–473 (SPSKRKTPSQATSSQAKEKLREE) is disordered.

The protein belongs to the membrane-bound acyltransferase family. In terms of assembly, interacts with SPTSSA; the interaction facilitates MBOAT7 location to mitochondria-associated membranes (MAMs).

The protein localises to the endoplasmic reticulum membrane. The catalysed reaction is a 1-acyl-sn-glycero-3-phospho-(1D-myo-inositol) + an acyl-CoA = a 1,2-diacyl-sn-glycero-3-phospho-(1D-myo-inositol) + CoA. The enzyme catalyses 1-octadecanoyl-sn-glycero-3-phospho-(1D-myo-inositol) + (5Z,8Z,11Z,14Z)-eicosatetraenoyl-CoA = 1-octadecanoyl-2-(5Z,8Z,11Z,14Z-eicosatetraenoyl)-sn-glycero-3-phospho-(1D-myo-inositol) + CoA. It catalyses the reaction a 1-acyl-sn-glycero-3-phospho-(1D-myo-inositol) + (5Z,8Z,11Z,14Z)-eicosatetraenoyl-CoA = a 1-acyl-2-(5Z,8Z,11Z,14Z-eicosatetraenoyl)-sn-glycero-3-phospho-(1D-myo-inositol) + CoA. It carries out the reaction (5Z,8Z,11Z,14Z)-eicosatetraenoyl-CoA + 1-hexadecanoyl-sn-glycero-3-phosphocholine = 1-hexadecanoyl-2-(5Z,8Z,11Z,14Z-eicosatetraenoyl)-sn-glycero-3-phosphocholine + CoA. It participates in lipid metabolism; phospholipid metabolism. Functionally, acyltransferase which catalyzes the transfer of an acyl group from an acyl-CoA to a lysophosphatidylinositol (1-acylglycerophosphatidylinositol or LPI) leading to the production of a phosphatidylinositol (1,2-diacyl-sn-glycero-3-phosphoinositol or PI) and participates in the reacylation step of the phospholipid remodeling pathway also known as the Lands cycle. Prefers arachidonoyl-CoA as the acyl donor, thus contributing to the regulation of free levels arachidonic acid in cell. In liver, participates in the regulation of triglyceride metabolism through the phosphatidylinositol acyl-chain remodeling regulation. The protein is Membrane-bound acylglycerophosphatidylinositol O-acyltransferase MBOAT7 of Mus musculus (Mouse).